A 123-amino-acid chain; its full sequence is Diacylglycerol kinase (123 aa).

A helical membrane pass occupies residues I15–G32. E33 is an a divalent metal cation binding site. Helical transmembrane passes span A35 to V55, A61 to E81, and G102 to L122. E74 serves as the catalytic Proton acceptor. Position 81 (E81) interacts with a divalent metal cation.

The protein belongs to the bacterial diacylglycerol kinase family. Requires Mg(2+) as cofactor.

The protein localises to the cell inner membrane. The enzyme catalyses a 1,2-diacyl-sn-glycerol + ATP = a 1,2-diacyl-sn-glycero-3-phosphate + ADP + H(+). Catalyzes the ATP-dependent phosphorylation of sn-l,2-diacylglycerol (DAG) to phosphatidic acid. Involved in the recycling of diacylglycerol produced as a by-product during membrane-derived oligosaccharide (MDO) biosynthesis. This chain is Diacylglycerol kinase (dgkA), found in Pseudomonas aeruginosa (strain ATCC 15692 / DSM 22644 / CIP 104116 / JCM 14847 / LMG 12228 / 1C / PRS 101 / PAO1).